Here is a 300-residue protein sequence, read N- to C-terminus: DNA repair protein PprA (300 aa).

A Phosphothreonine modification is found at Thr88. Position 128 is a phosphoserine (Ser128). Thr160 carries the post-translational modification Phosphothreonine.

Phosphorylated by RqkA in vitro. Phosphorylated primarily at Thr-88, and to a little extent at Ser-128 and Thr-160.

Its activity is regulated as follows. Phosphorylation increases DNA binding affinity. Its function is as follows. dsDNA-binding protein that contributes to the ionizing radiation resistance of D.radiodurans. Plays a role in DNA repair and genome reconstitution, and is necessary for recovery from severe genomic fragmentation as a result of exposure to severe levels of ionizing radiation. In vitro, binds to double-stranded DNA carrying strand breaks and stimulates the DNA end-joining reaction catalyzed by DNA ligases. Thus, PprA plays a critical role in a non-homologous end-joining (NHEJ) pathway for the repair of radiation-induced DNA double-strands breaks. Cannot bind to dsDNA without strand breaks or single-stranded DNA. This Deinococcus radiodurans (strain ATCC 13939 / DSM 20539 / JCM 16871 / CCUG 27074 / LMG 4051 / NBRC 15346 / NCIMB 9279 / VKM B-1422 / R1) protein is DNA repair protein PprA (pprA).